We begin with the raw amino-acid sequence, 534 residues long: MLGTLGAGLSNFPWLSASILFPIGSAFVIPFFPDKGDGKEVRWFALSIALITFLITVGSYINGFDISNENVQLKENISWLPDLGLTWSVGADGMSMPLILLTSFITALAVLAAWPVKFKPKLFFFLILVMDGGQIAVFAVQDMLLFFLTWELELIPVYLLLAIWGGKNRQYAATKFIIYTAGSSIFILLAALAMGFYGTEIPNFEFSHLAAQDFSQKFQILCYVGLLIAFGVKLPIVPLHTWLPDAHGEATAPVHMLLAGILLKMGGYALLRFNAQLLPVAHAQFAPLLIVLGVVNIIYAALTSFAQRNLKRKIAYSSISHMGFVLIGIGSFSSLGTSGAMLQMVSHGLIGASLFFLVGATYDRTKTLKLDEMSGVGQKMRIMFALWTACSLASLALPGMSGFVSELMVFTGFVTDEVYTLPFRVVMASLAAIGVILTPIYLLSMLREIFFGKENPKLIEERKLIDAEPREVYIIACLLLPIIGIGLYPRLVTESYIASINNLVDRDLTAIKSAAKANIFSGTKKNDILKAPTI.

14 consecutive transmembrane segments (helical) span residues 12–32 (FPWL…IPFF), 44–64 (FALS…INGF), 96–116 (MPLI…AWPV), 120–140 (PKLF…VFAV), 144–164 (LLFF…LAIW), 176–196 (FIIY…AMGF), 220–240 (ILCY…VPLH), 251–271 (TAPV…YALL), 285–305 (FAPL…LTSF), 314–334 (IAYS…SFSS), 340–360 (AMLQ…LVGA), 384–404 (FALW…SGFV), 425–445 (VVMA…LLSM), and 472–492 (VYII…PRLV).

Belongs to the complex I subunit 4 family.

It is found in the cellular thylakoid membrane. It carries out the reaction a plastoquinone + NADH + (n+1) H(+)(in) = a plastoquinol + NAD(+) + n H(+)(out). The enzyme catalyses a plastoquinone + NADPH + (n+1) H(+)(in) = a plastoquinol + NADP(+) + n H(+)(out). In terms of biological role, NDH-1 shuttles electrons from NAD(P)H, via FMN and iron-sulfur (Fe-S) centers, to quinones in the respiratory chain. The immediate electron acceptor for the enzyme in this species is believed to be plastoquinone. Couples the redox reaction to proton translocation (for every two electrons transferred, four hydrogen ions are translocated across the cytoplasmic membrane), and thus conserves the redox energy in a proton gradient. In Prochlorococcus marinus (strain AS9601), this protein is NAD(P)H-quinone oxidoreductase chain 4.